Consider the following 130-residue polypeptide: Tripartite terminase subunit 2 (130 aa).

It belongs to the herpesviridae TRM2 protein family. As to quaternary structure, associates with TRM1 and TRM3 to form the tripartite terminase complex.

The protein resides in the host nucleus. Its function is as follows. Component of the molecular motor that translocates viral genomic DNA in empty capsid during DNA packaging. Forms a tripartite terminase complex together with TRM1 and TRM3 in the host cytoplasm. Once the complex reaches the host nucleus, it interacts with the capsid portal vertex. This portal forms a ring in which genomic DNA is translocated into the capsid. This chain is Tripartite terminase subunit 2, found in Homo sapiens (Human).